Consider the following 189-residue polypeptide: Small ribosomal subunit protein uS5 (189 aa).

Residues 22–85 form the S5 DRBM domain; it reads LIDKLVTINR…ERAKRGMIRV (64 aa). Positions 164 to 189 are disordered; the sequence is SVASRRGKKVADLFGPKREKEAPADV. The span at 172 to 189 shows a compositional bias: basic and acidic residues; sequence KVADLFGPKREKEAPADV.

It belongs to the universal ribosomal protein uS5 family. In terms of assembly, part of the 30S ribosomal subunit. Contacts proteins S4 and S8.

Its function is as follows. With S4 and S12 plays an important role in translational accuracy. Functionally, located at the back of the 30S subunit body where it stabilizes the conformation of the head with respect to the body. This Acidiphilium cryptum (strain JF-5) protein is Small ribosomal subunit protein uS5.